We begin with the raw amino-acid sequence, 507 residues long: Tryptophan aminotransferase-related protein 2 (507 aa).

Positions Pro-91–Val-135 are disordered. Residues Tyr-169, Ser-211–Thr-212, Asn-282, Asp-304–Tyr-307, Thr-327–Lys-330, and Arg-338 each bind pyridoxal 5'-phosphate. Residue Lys-330 is modified to N6-(pyridoxal phosphate)lysine.

This sequence belongs to the alliinase family. It depends on pyridoxal 5'-phosphate as a cofactor. As to expression, widely expressed.

The enzyme catalyses L-tryptophan + 2-oxoglutarate = indole-3-pyruvate + L-glutamate. Its pathway is plant hormone metabolism; auxin biosynthesis. Probable tryptophan aminotransferase involved in auxin (IAA) biosynthesis. Required for auxin production to initiate multiple change in growth in response to environmental and developmental cues. Functions upstream of YUCCA1 in auxin biosynthesis. Required for polar auxin transport. The chain is Tryptophan aminotransferase-related protein 2 from Oryza sativa subsp. japonica (Rice).